The following is a 355-amino-acid chain: MIPRKRYGSKNTDQGVYLGLSKTQVLSPATAINSSSDIAPLPTPVALVPSPPDTMSCRDRTQEFLSACKSLQSRQNGIQTNKPALHATRQCSEFTLMARRIGKDLSNTFAKLEKLTILAKRKSLFDDKAVEIEELTYIIKQDINSLNKQIAQLQDFVRAKGSQSGRHLQTHSNTIVVSLQSKLASMSNDFKSVLEVRTENLKQQRNRREQFSRAPVSALPLAPNNLGGGPIVLGGESRASRDVAIDMMDPRTSQQLQLIDEQDSYIQSRADTMQNIESTIVELGSIFQQLAHMVKEQEETIQRIDENVLGAQLDVEAAHSEILKYFQSVTSNRWLMVKIFLILIVFFIIFVVFLA.

The Cytoplasmic portion of the chain corresponds to 1 to 333 (MIPRKRYGSK…KYFQSVTSNR (333 aa)). The IxM motif; signal for cargo packaging into COPII-coated vesicles motif lies at 245 to 247 (IDM). The 63-residue stretch at 263–325 (DSYIQSRADT…EAAHSEILKY (63 aa)) folds into the t-SNARE coiled-coil homology domain. Residues 287-318 (FQQLAHMVKEQEETIQRIDENVLGAQLDVEAA) are a coiled coil. A helical; Anchor for type IV membrane protein membrane pass occupies residues 334 to 354 (WLMVKIFLILIVFFIIFVVFL). Ala355 is a topological domain (vesicular).

Belongs to the syntaxin family. Part of a ternary complex containing STX5A, NSFL1C and VCP. Part of a unique SNARE complex composed of the Golgi SNAREs GOSR1, GOSR2 and YKT6. This complex also includes VTI1A. Component of a SNARE complex consisting of STX5, YKT6, GOSR1 and BET1L. Interacts with BET1L. Interacts with BET1. Interacts with COG4. Interacts with GM130/GOLGA2. Interacts (via IxM motif) with SEC24C and SEC24D; mediates STX5 packaging into COPII-coated vesicles. Interacts with VLDLR; this interaction mediates VLDLR translocation from the endoplasmic reticulum to the plasma membrane. In terms of tissue distribution, expressed in the brain, heart, spleen, lung, liver, kidney and testis.

It is found in the endoplasmic reticulum-Golgi intermediate compartment membrane. The protein resides in the golgi apparatus membrane. In terms of biological role, mediates endoplasmic reticulum to Golgi transport. Together with p115/USO1 and GM130/GOLGA2, involved in vesicle tethering and fusion at the cis-Golgi membrane to maintain the stacked and inter-connected structure of the Golgi apparatus. Required for Golgi to endoplasmic reticulum retrogade transport, and for intra-Golgi transport. The protein is Syntaxin-5 (Stx5) of Rattus norvegicus (Rat).